The sequence spans 226 residues: 7-cyano-7-deazaguanine synthase (226 aa).

9–19 (YSGGLDSTTCL) provides a ligand contact to ATP. Zn(2+) is bound by residues cysteine 189, cysteine 199, cysteine 202, and cysteine 205.

This sequence belongs to the QueC family. It depends on Zn(2+) as a cofactor.

It catalyses the reaction 7-carboxy-7-deazaguanine + NH4(+) + ATP = 7-cyano-7-deazaguanine + ADP + phosphate + H2O + H(+). The protein operates within purine metabolism; 7-cyano-7-deazaguanine biosynthesis. Functionally, catalyzes the ATP-dependent conversion of 7-carboxy-7-deazaguanine (CDG) to 7-cyano-7-deazaguanine (preQ(0)). This Pelobacter propionicus (strain DSM 2379 / NBRC 103807 / OttBd1) protein is 7-cyano-7-deazaguanine synthase.